Here is a 426-residue protein sequence, read N- to C-terminus: uncharacterized protein (426 aa).

An N-terminal signal peptide occupies residues 1-23 (MKKFILFLIILLFSIYFLNVSSA).

This is an uncharacterized protein from Methanocaldococcus jannaschii (strain ATCC 43067 / DSM 2661 / JAL-1 / JCM 10045 / NBRC 100440) (Methanococcus jannaschii).